Consider the following 679-residue polypeptide: Glycine--tRNA ligase beta subunit (679 aa).

This sequence belongs to the class-II aminoacyl-tRNA synthetase family. Tetramer of two alpha and two beta subunits.

Its subcellular location is the cytoplasm. It carries out the reaction tRNA(Gly) + glycine + ATP = glycyl-tRNA(Gly) + AMP + diphosphate. This is Glycine--tRNA ligase beta subunit from Streptococcus pyogenes serotype M49 (strain NZ131).